Reading from the N-terminus, the 242-residue chain is MVTPKFRRVILKLSGEALAGQKGYGIDPEVVYSIASQIKDVLEHRVQLAIVVGGGNIWRGISGSTKGMDRATADYMGMLATVINSLALQDALEKIEVDTRVQTSFEMRAVAETYIRRRAIRHMEKGRVVIFAAGTGNPYFSTDTTAALRAAEVEAEIILMAKQVDGVYDADPLKHPGAKRFDELTYIDVLNRGLQVMDSTAVSLCMDNKIPLLVFDLNTEGNIKRAILGERIGTFVGGDLNG.

12–15 lines the ATP pocket; the sequence is KLSG. The tract at residues 20–25 is involved in allosteric activation by GTP; the sequence is GQKGYG. G54 is a binding site for UMP. Positions 55 and 59 each coordinate ATP. Residues D74 and 135–142 contribute to the UMP site; that span reads TGNPYFST. ATP-binding residues include Q163, Y168, and D171.

This sequence belongs to the UMP kinase family. In terms of assembly, homohexamer.

The protein localises to the cytoplasm. The enzyme catalyses UMP + ATP = UDP + ADP. It participates in pyrimidine metabolism; CTP biosynthesis via de novo pathway; UDP from UMP (UMPK route): step 1/1. With respect to regulation, allosterically activated by GTP. Inhibited by UTP. Catalyzes the reversible phosphorylation of UMP to UDP. The sequence is that of Uridylate kinase from Desulforamulus reducens (strain ATCC BAA-1160 / DSM 100696 / MI-1) (Desulfotomaculum reducens).